A 92-amino-acid polypeptide reads, in one-letter code: Co-chaperonin GroES (92 aa).

The protein belongs to the GroES chaperonin family. In terms of assembly, heptamer of 7 subunits arranged in a ring. Interacts with the chaperonin GroEL.

Its subcellular location is the cytoplasm. Functionally, together with the chaperonin GroEL, plays an essential role in assisting protein folding. The GroEL-GroES system forms a nano-cage that allows encapsulation of the non-native substrate proteins and provides a physical environment optimized to promote and accelerate protein folding. GroES binds to the apical surface of the GroEL ring, thereby capping the opening of the GroEL channel. The chain is Co-chaperonin GroES from Thermotoga petrophila (strain ATCC BAA-488 / DSM 13995 / JCM 10881 / RKU-1).